The following is a 70-amino-acid chain: Large ribosomal subunit protein bL31 (70 aa).

Positions 16, 18, 37, and 40 each coordinate Zn(2+).

Belongs to the bacterial ribosomal protein bL31 family. Type A subfamily. Part of the 50S ribosomal subunit. Requires Zn(2+) as cofactor.

Functionally, binds the 23S rRNA. In Shewanella oneidensis (strain ATCC 700550 / JCM 31522 / CIP 106686 / LMG 19005 / NCIMB 14063 / MR-1), this protein is Large ribosomal subunit protein bL31.